Consider the following 134-residue polypeptide: Profilin-1 (134 aa).

C13 and C118 form a disulfide bridge. Positions 84–100 (AVVRGKKGSGGITIKKT) match the Involved in PIP2 interaction motif. T114 carries the post-translational modification Phosphothreonine.

This sequence belongs to the profilin family. Occurs in many kinds of cells as a complex with monomeric actin in a 1:1 ratio. Phosphorylated by MAP kinases.

It is found in the cytoplasm. The protein localises to the cytoskeleton. In terms of biological role, binds to actin and affects the structure of the cytoskeleton. At high concentrations, profilin prevents the polymerization of actin, whereas it enhances it at low concentrations. This Olea europaea (Common olive) protein is Profilin-1.